The primary structure comprises 617 residues: COMPASS component cclA (617 aa).

Composition is skewed to low complexity over residues 1–19 (MASI…INSP) and 40–50 (SSPAPASNASA). The disordered stretch occupies residues 1-89 (MASIQPAGSS…AKKRATAVQN (89 aa)). The segment covering 57-69 (SKRNKRDSRKKRE) has biased composition (basic residues). The region spanning 157–380 (IADTSFPHIK…YAFNLKETPT (224 aa)) is the B30.2/SPRY domain. Positions 595-617 (TPNTEEPAARPENITVGHDVEMS) are disordered.

Belongs to the cclA family. Component of the COMPASS complex.

The protein localises to the nucleus. It is found in the chromosome. The protein resides in the telomere. Its function is as follows. Component of the COMPASS (Set1C) complex that specifically mono-, di- and trimethylates histone H3 to form H3K4me1/2/3, which subsequently plays a role in telomere length maintenance and transcription elongation regulation. Controls the production of several secondary metabolites, including astellolides. This is COMPASS component cclA from Aspergillus oryzae (strain ATCC 42149 / RIB 40) (Yellow koji mold).